The chain runs to 440 residues: Alpha-ionylideneethane synthase aba3 (440 aa).

The protein belongs to the alpha-ionylideneethane synthase family.

It functions in the pathway hormone biosynthesis. Its function is as follows. Alpha-ionylideneethane synthase; part of the gene cluster that mediates the biosynthesis of abscisic acid (ABA), a phytohormone that acts antagonistically toward salicylic acid (SA), jasmonic acid (JA) and ethylene (ETH) signaling, to impede plant defense responses. The first step of the pathway catalyzes the reaction from farnesyl diphosphate to alpha-ionylideneethane performed by the alpha-ionylideneethane synthase aba3 via a three-step reaction mechanism involving 2 neutral intermediates, beta-farnesene and allofarnesene. The cytochrome P450 monooxygenase aba1 might then be involved in the conversion of alpha-ionylideneethane to alpha-ionylideneacetic acid. Alpha-ionylideneacetic acid is further converted to abscisic acid in 2 steps involving the cytochrome P450 monooxygenase aba2 and the short-chain dehydrogenase/reductase aba4, via the intermediates 1'-deoxy-ABA or 1',4'-trans-diol-ABA, depending on the order of action of these 2 enzymes. Aba2 is responsible for the hydroxylation of carbon atom C-1' and aba4 might be involved in the oxidation of the C-4' carbon atom. This Botryotinia fuckeliana (strain B05.10) (Noble rot fungus) protein is Alpha-ionylideneethane synthase aba3.